The sequence spans 146 residues: MGEVRRPDRVAEAIREEVATFLSEGAKDPRIRAFVTVTAVEVTRDLRHATVFVSLMGDDADKKSTTAGLASVASHLRSQLGKSLRLRSAPEIHFRTDESVARASRIEHLLAKIRDEREAQEPAQDPAQDSSQDASVEASDAPDKAE.

Positions 113-146 (IRDEREAQEPAQDPAQDSSQDASVEASDAPDKAE) are disordered.

The protein belongs to the RbfA family. Monomer. Binds 30S ribosomal subunits, but not 50S ribosomal subunits or 70S ribosomes.

It is found in the cytoplasm. Its function is as follows. One of several proteins that assist in the late maturation steps of the functional core of the 30S ribosomal subunit. Associates with free 30S ribosomal subunits (but not with 30S subunits that are part of 70S ribosomes or polysomes). Required for efficient processing of 16S rRNA. May interact with the 5'-terminal helix region of 16S rRNA. The protein is Ribosome-binding factor A of Gemmatimonas aurantiaca (strain DSM 14586 / JCM 11422 / NBRC 100505 / T-27).